Reading from the N-terminus, the 164-residue chain is Crossover junction endodeoxyribonuclease RuvC (164 aa).

Residues Asp-7, Glu-67, and Asp-140 contribute to the active site. Mg(2+) contacts are provided by Asp-7, Glu-67, and Asp-140.

It belongs to the RuvC family. Homodimer which binds Holliday junction (HJ) DNA. The HJ becomes 2-fold symmetrical on binding to RuvC with unstacked arms; it has a different conformation from HJ DNA in complex with RuvA. In the full resolvosome a probable DNA-RuvA(4)-RuvB(12)-RuvC(2) complex forms which resolves the HJ. Mg(2+) serves as cofactor.

Its subcellular location is the cytoplasm. The catalysed reaction is Endonucleolytic cleavage at a junction such as a reciprocal single-stranded crossover between two homologous DNA duplexes (Holliday junction).. The RuvA-RuvB-RuvC complex processes Holliday junction (HJ) DNA during genetic recombination and DNA repair. Endonuclease that resolves HJ intermediates. Cleaves cruciform DNA by making single-stranded nicks across the HJ at symmetrical positions within the homologous arms, yielding a 5'-phosphate and a 3'-hydroxyl group; requires a central core of homology in the junction. The consensus cleavage sequence is 5'-(A/T)TT(C/G)-3'. Cleavage occurs on the 3'-side of the TT dinucleotide at the point of strand exchange. HJ branch migration catalyzed by RuvA-RuvB allows RuvC to scan DNA until it finds its consensus sequence, where it cleaves and resolves the cruciform DNA. The chain is Crossover junction endodeoxyribonuclease RuvC from Chloroflexus aggregans (strain MD-66 / DSM 9485).